The chain runs to 287 residues: 4-hydroxybenzoate octaprenyltransferase (287 aa).

9 consecutive transmembrane segments (helical) span residues 20 to 40 (IGSLLLLWPTLWALFLAADGL), 43 to 63 (MHVLVVFVLGVVFMRAAGCVI), 94 to 114 (LGLFGLLVLVSFVLVLTMNTL), 115 to 135 (TIMLSVVGLVLAAAYPFMKRY), 137 to 157 (HLPQLVLGMAFGWSIPMAYAA), 159 to 179 (AGELPVVAWLLFTANILWTIA), 210 to 230 (IIIGVLQLSTLVTMILIGHSL), 235 to 255 (IYYWFLLMASGLFVYQQRLIG), and 266 to 286 (FLNNNYVGMLIFLGIAISVMM).

This sequence belongs to the UbiA prenyltransferase family. Requires Mg(2+) as cofactor.

It is found in the cell inner membrane. The enzyme catalyses all-trans-octaprenyl diphosphate + 4-hydroxybenzoate = 4-hydroxy-3-(all-trans-octaprenyl)benzoate + diphosphate. Its pathway is cofactor biosynthesis; ubiquinone biosynthesis. Catalyzes the prenylation of para-hydroxybenzoate (PHB) with an all-trans polyprenyl group. Mediates the second step in the final reaction sequence of ubiquinone-8 (UQ-8) biosynthesis, which is the condensation of the polyisoprenoid side chain with PHB, generating the first membrane-bound Q intermediate 3-octaprenyl-4-hydroxybenzoate. The polypeptide is 4-hydroxybenzoate octaprenyltransferase (Photobacterium profundum (strain SS9)).